Reading from the N-terminus, the 130-residue chain is Large ribosomal subunit protein bL20 (130 aa).

Belongs to the bacterial ribosomal protein bL20 family.

In terms of biological role, binds directly to 23S ribosomal RNA and is necessary for the in vitro assembly process of the 50S ribosomal subunit. It is not involved in the protein synthesizing functions of that subunit. This chain is Large ribosomal subunit protein bL20, found in Leifsonia xyli subsp. xyli (strain CTCB07).